A 564-amino-acid chain; its full sequence is Agglutinin (564 aa).

The first 24 residues, 1–24 (MYAVATWLCFGSTSGWSFTLEDNN), serve as a signal peptide directing secretion. A beta-D-galactose-binding site is contributed by 32-34 (IIN). Residue asparagine 34 is glycosylated (N-linked (GlcNAc...) asparagine). Catalysis depends on residues tyrosine 104, tyrosine 147, glutamate 200, and arginine 203. AMP-binding positions include 104-105 (YV) and 145-147 (GNY). Asparagine 259 carries an N-linked (GlcNAc...) asparagine glycan. A disulfide bond links cysteine 282 and cysteine 306. A propeptide spans 291–302 (SLLIRPVVPNFN) (linker peptide). The region spanning 309 to 436 (PEPIVRIVGR…YAVSQGWLPT (128 aa)) is the Ricin B-type lectin 1 domain. Beta-D-galactose-binding positions include isoleucine 312, 324–328 (DVTGE), glutamine 337, lysine 342, and asparagine 348. The 1-alpha repeat unit spans residues 319–361 (NGLCVDVTGEEFFDGNPIQLWPCKSNTDWNQLWTLRKDSTIRS). An intrachain disulfide couples cysteine 322 to cysteine 341. The 1-beta repeat unit spans residues 362–402 (NGKCLTISKSSPRQQVVIYNCSTATVGATRWQIWDNRTIIN). Cysteine 365 and cysteine 382 are joined by a disulfide. N-linked (GlcNAc...) asparagine glycosylation is found at asparagine 397 and asparagine 437. Residues 405 to 437 (SGLVLAATSGNSGTKLTVQTNIYAVSQGWLPTN) form a 1-gamma repeat. Asparagine 437 lines the beta-D-galactose pocket. Positions 439 to 563 (TQPFVTTIVG…GNLNQIWLPL (125 aa)) constitute a Ricin B-type lectin 2 domain. Residues 450–485 (YGMCLQANSGKVWLEDCTSEKAEQQWALYADGSIRP) form a 2-alpha repeat. Disulfide bonds link cysteine 453–cysteine 466 and cysteine 492–cysteine 509. Residues 489–528 (RDNCLTTDANIKGTVVKILSCGPASSGQRWMFKNDGTILN) form a 2-beta repeat. One copy of the 2-gamma repeat lies at 531 to 558 (NGLVLDVRRSDPSLKQIIVHPFHGNLNQ).

This sequence in the N-terminal section; belongs to the ribosome-inactivating protein family. Type 2 RIP subfamily.

The enzyme catalyses Endohydrolysis of the N-glycosidic bond at one specific adenosine on the 28S rRNA.. This is Agglutinin from Ricinus communis (Castor bean).